The following is a 354-amino-acid chain: Lariat debranching enzyme (354 aa).

Residues Cys-14, His-16, and Asp-45 each coordinate a divalent metal cation. Positions 59, 90, 91, 134, and 156 each coordinate RNA. Asn-90 lines the a divalent metal cation pocket. Residues 130–158 (SGIYKSFDEKKPYTYPPSPNDVVSLFHTR) form a lariat recognition loop region. His-180 lines the a divalent metal cation pocket. RNA contacts are provided by Gly-201, Asp-205, His-230, Met-231, and His-232. His-230 contributes to the a divalent metal cation binding site. His-232 contacts a divalent metal cation.

The protein belongs to the lariat debranching enzyme family. Fe(2+) is required as a cofactor. It depends on Zn(2+) as a cofactor. The cofactor is Mn(2+).

Its subcellular location is the cytoplasm. It localises to the perinuclear region. Active in presence of diverse metals including Fe(2+), Zn(2+) and Mn(2+). Binds two metal cations in two adjacent alpha and beta metal-binding pockets. The activity is the highest with Fe(2+) bound to the 2 metal-binding sites. The activity is slightly lower with Fe(2+) bound to the beta site and Zn(2+) to the alpha site and decreases further when only Zn(2+) is bound. No activity with Mn(2+). However, another study showed activity with Mn(2+) bound to the beta site and Zn(2+) to the alpha site. Mn(2+) appears unable to bind to the alpha site. Its function is as follows. Cleaves the 2'-5' phosphodiester linkage at the branch point of excised lariat intron RNA and converts them into linear molecules that can be subsequently degraded, thereby facilitating ribonucleotide turnover. This chain is Lariat debranching enzyme, found in Entamoeba histolytica (strain ATCC 30459 / HM-1:IMSS / ABRM).